A 263-amino-acid chain; its full sequence is Sepiapterin reductase (263 aa).

Residues 18–24, 46–47, and 73–74 contribute to the NADP(+) site; these read GASRGFG, RT, and DL. Substrate-binding positions include 160–161 and Tyr-173; that span reads SL. An NADP(+)-binding site is contributed by Lys-177. Gly-202 contacts substrate. Position 204–209 (204–209) interacts with NADP(+); sequence LDTDMH. Substrate is bound at residue Asp-260.

It belongs to the sepiapterin reductase family. Homodimer.

The protein resides in the cytoplasm. The enzyme catalyses L-erythro-7,8-dihydrobiopterin + NADP(+) = L-sepiapterin + NADPH + H(+). It catalyses the reaction (6R)-L-erythro-5,6,7,8-tetrahydrobiopterin + 2 NADP(+) = 6-pyruvoyl-5,6,7,8-tetrahydropterin + 2 NADPH + 2 H(+). In terms of biological role, catalyzes the final one or two reductions in tetra-hydrobiopterin biosynthesis to form 5,6,7,8-tetrahydrobiopterin. In Xenopus laevis (African clawed frog), this protein is Sepiapterin reductase (spr).